Reading from the N-terminus, the 101-residue chain is Chaperone modulatory protein CbpM (101 aa).

It belongs to the CbpM family.

Interacts with CbpA and inhibits both the DnaJ-like co-chaperone activity and the DNA binding activity of CbpA. Together with CbpA, modulates the activity of the DnaK chaperone system. Does not inhibit the co-chaperone activity of DnaJ. The polypeptide is Chaperone modulatory protein CbpM (Pseudomonas putida (strain ATCC 47054 / DSM 6125 / CFBP 8728 / NCIMB 11950 / KT2440)).